The chain runs to 237 residues: Class B acid phosphatase (237 aa).

An N-terminal signal peptide occupies residues 1-23; that stretch reads MKKITLALSAVCLLFTLNHSANA. Aspartate 69 (nucleophile) is an active-site residue. Positions 69 and 71 each coordinate Mg(2+). The active-site Proton donor is the aspartate 71. Residues 137 to 138 and lysine 177 contribute to the substrate site; that span reads TG. Position 192 (aspartate 192) interacts with Mg(2+).

This sequence belongs to the class B bacterial acid phosphatase family. As to quaternary structure, homotetramer. The cofactor is Mg(2+).

The protein localises to the periplasm. The enzyme catalyses a phosphate monoester + H2O = an alcohol + phosphate. With respect to regulation, nucleosides, and particularly 2'-deoxyribonucleosides, are potent inhibitors of the phosphatase activity. The phosphatase activity is also inhibited by inorganic phosphate and EDTA in vitro. In terms of biological role, dephosphorylates several organic phosphate monoesters such as 3'-UMP, 5'-UMP and pNPP. Also has a phosphotransferase activity catalyzing the transfer of low-energy phosphate groups from organic phosphate monoesters to free hydroxyl groups of various organic compounds such as the 2'-, 3-, or 5'-hydroxyls of nucleosides and nucleotides. Also displays significant phosphomutase activity since it is able to catalyze the transfer of the phosphate group of 3'-AMP from the 3'-position both to the 2'- and 5'-positions. One of the physiological functions of the phosphohydrolytic activity of the enzyme is believed to be the scavenging of organic phosphate esters that otherwise cannot pass the cytoplasmic membrane. The polypeptide is Class B acid phosphatase (aphA) (Salmonella typhimurium (strain LT2 / SGSC1412 / ATCC 700720)).